The following is a 380-amino-acid chain: Pregnancy-associated glycoprotein 1 (380 aa).

The signal sequence occupies residues 1–15 (MKWLVLLGLVAFSEC). A propeptide spans 16 to 53 (IVKIPLRRLKTMRNVVSGKNMLNNFLKEHAYSLSQISF) (activation peptide). N57 and N74 each carry an N-linked (GlcNAc...) asparagine glycan. The Peptidase A1 domain occupies 71–377 (YMGNITIGTP…DRGNDRIGLA (307 aa)). D89 is an active-site residue. C102 and C107 form a disulfide bridge. N-linked (GlcNAc...) asparagine glycosylation is found at N125 and N182. A disulfide bond links C261 and C265. D270 is an active-site residue. A disulfide bridge links C303 with C337.

It belongs to the peptidase A1 family. In terms of processing, N-Glycosylated; the glycans terminate in either N-acetyl-galactosamine (GalNAc) or N-acetyllactosamine. Terminal GalNAc on Asn-linked glycans is greatly reduced prior to parturition while lactosamine-type N-glycans remain unaltered. As to expression, trophoblast and placental tissue. Produced specifically in the invasive binucleate cells of the placenta. Becomes detectable in maternal serum soon after implantation.

It localises to the secreted. The protein localises to the extracellular space. In terms of biological role, appears to be proteolytically inactive. In Bos taurus (Bovine), this protein is Pregnancy-associated glycoprotein 1.